Consider the following 294-residue polypeptide: Early 4 ORF6 protein (294 aa).

The Nuclear localization signal signature appears at 239–255 (ARRTRRLMLRAVRIIAE).

This sequence belongs to the adenoviridae E4 30 to 34 kDa protein family. Interacts with E1B-55k.

It is found in the host nucleus. Its subcellular location is the host cytoplasm. Plays a major role to prevent cellular inhibition of viral genome replication by nuclear bodies. Assembles an SCF-like E3 ubiquitin ligase complex based on the cellular proteins ELOB, ELOC, CUL5 and RBX1, in cooperation with viral E1B-55K. This viral RING-type ligase ubiquitinates cellular substrates prior to proteasomal degradation: p53/TP53, LIG4, MRE11-RAD50-NBS1 (MRN) complex, ITGA3, DAXX and BLM. The sequence is that of Early 4 ORF6 protein from Homo sapiens (Human).